Reading from the N-terminus, the 70-residue chain is MRAIISLILISAMVFSMIAAVPXXEGLQLSEDERGGCLPHNRFCNALSGPRCCSGLKCKELSIWDSICLG.

The N-terminal stretch at 1–20 (MRAIISLILISAMVFSMIAA) is a signal peptide. Positions 21–34 (VPXXEGLQLSEDER) are excised as a propeptide. 3 disulfide bridges follow: cysteine 37/cysteine 53, cysteine 44/cysteine 58, and cysteine 52/cysteine 68. A Leucine amide modification is found at leucine 69.

This sequence belongs to the neurotoxin 01 (U2-agtx) family. In terms of tissue distribution, expressed by the venom gland.

The protein resides in the secreted. Its function is as follows. Insect active toxin causing rapid but reversible paralysis in crickets. No activity shown in mammals. Does not show effect on mammalian voltage-gated calcium channels. The chain is U2-agatoxin-Ao1p from Agelena orientalis (Funnel-web spider).